The primary structure comprises 201 residues: Recombination protein RecR (201 aa).

The segment at 57–72 (CRYCRNLSDAEVCLLC) adopts a C4-type zinc-finger fold. Residues 80–175 (QQICVVETPA…QATRLAYGVP (96 aa)) form the Toprim domain.

It belongs to the RecR family.

Functionally, may play a role in DNA repair. It seems to be involved in an RecBC-independent recombinational process of DNA repair. It may act with RecF and RecO. In Dichelobacter nodosus (strain VCS1703A), this protein is Recombination protein RecR.